The chain runs to 900 residues: Alanine--tRNA ligase (900 aa).

Residues His604, His608, Cys708, and His712 each contribute to the Zn(2+) site.

It belongs to the class-II aminoacyl-tRNA synthetase family. Requires Zn(2+) as cofactor.

The protein resides in the cytoplasm. It carries out the reaction tRNA(Ala) + L-alanine + ATP = L-alanyl-tRNA(Ala) + AMP + diphosphate. Its function is as follows. Catalyzes the attachment of alanine to tRNA(Ala) in a two-step reaction: alanine is first activated by ATP to form Ala-AMP and then transferred to the acceptor end of tRNA(Ala). Also edits incorrectly charged Ser-tRNA(Ala) and Gly-tRNA(Ala) via its editing domain. The sequence is that of Alanine--tRNA ligase from Saccharolobus islandicus (strain Y.G.57.14 / Yellowstone #1) (Sulfolobus islandicus).